Here is a 236-residue protein sequence, read N- to C-terminus: Ribonuclease 3 (236 aa).

The RNase III domain occupies 8–130 (FRRLSQALDY…TFAAVSFDAD (123 aa)). E43 is a binding site for Mg(2+). D47 is an active-site residue. The Mg(2+) site is built by D116 and E119. The active site involves E119. One can recognise a DRBM domain in the interval 157 to 227 (DAKTRLQEAL…AEAALTLLEQ (71 aa)).

It belongs to the ribonuclease III family. In terms of assembly, homodimer. Mg(2+) serves as cofactor.

The protein localises to the cytoplasm. The enzyme catalyses Endonucleolytic cleavage to 5'-phosphomonoester.. Digests double-stranded RNA. Involved in the processing of primary rRNA transcript to yield the immediate precursors to the large and small rRNAs (23S and 16S). Processes some mRNAs, and tRNAs when they are encoded in the rRNA operon. Processes pre-crRNA and tracrRNA of type II CRISPR loci if present in the organism. In Chromobacterium violaceum (strain ATCC 12472 / DSM 30191 / JCM 1249 / CCUG 213 / NBRC 12614 / NCIMB 9131 / NCTC 9757 / MK), this protein is Ribonuclease 3.